Reading from the N-terminus, the 187-residue chain is Large ribosomal subunit protein bL12cx (187 aa).

Residues 1-54 (MASTTLSIATTIRSSSPLTSASTHHFLSKPTAIEFPFRLSSSSSHRAINLRPIS) constitute a chloroplast transit peptide.

Belongs to the bacterial ribosomal protein bL12 family.

It is found in the plastid. The protein resides in the chloroplast. The chain is Large ribosomal subunit protein bL12cx (RPL12C) from Arabidopsis thaliana (Mouse-ear cress).